The following is a 311-amino-acid chain: Putative UPF0607 protein ENSP00000382826 (311 aa).

The segment covering 48–61 (AEEPKEATEVKDQV) has biased composition (basic and acidic residues). Disordered stretches follow at residues 48-99 (AEEP…WYNP), 186-229 (GLLM…PLQL), and 291-311 (RKQLLRRRKKTRQGRRGGSCL). Over residues 78–97 (EAASTSRPLETQGNLTSSWY) the composition is skewed to polar residues. Composition is skewed to basic residues over residues 213–222 (AGHRSRKRKL) and 291–305 (RKQLLRRRKKTRQGR).

The protein belongs to the UPF0607 family.

This Homo sapiens (Human) protein is Putative UPF0607 protein ENSP00000382826.